Reading from the N-terminus, the 72-residue chain is DNA-directed RNA polymerase subunit omega (72 aa).

This sequence belongs to the RNA polymerase subunit omega family. The RNAP catalytic core consists of 2 alpha, 1 beta, 1 beta' and 1 omega subunit. When a sigma factor is associated with the core the holoenzyme is formed, which can initiate transcription.

It carries out the reaction RNA(n) + a ribonucleoside 5'-triphosphate = RNA(n+1) + diphosphate. Its function is as follows. Promotes RNA polymerase assembly. Latches the N- and C-terminal regions of the beta' subunit thereby facilitating its interaction with the beta and alpha subunits. The chain is DNA-directed RNA polymerase subunit omega from Clostridium kluyveri (strain NBRC 12016).